The chain runs to 383 residues: 8-amino-7-oxononanoate synthase (383 aa).

A substrate-binding site is contributed by R23. 110–111 is a binding site for pyridoxal 5'-phosphate; it reads GF. H135 is a substrate binding site. Pyridoxal 5'-phosphate contacts are provided by S181, H209, and T235. An N6-(pyridoxal phosphate)lysine modification is found at K238. Residue T351 participates in substrate binding.

The protein belongs to the class-II pyridoxal-phosphate-dependent aminotransferase family. BioF subfamily. As to quaternary structure, homodimer. Requires pyridoxal 5'-phosphate as cofactor.

It carries out the reaction 6-carboxyhexanoyl-[ACP] + L-alanine + H(+) = (8S)-8-amino-7-oxononanoate + holo-[ACP] + CO2. It participates in cofactor biosynthesis; biotin biosynthesis. Catalyzes the decarboxylative condensation of pimeloyl-[acyl-carrier protein] and L-alanine to produce 8-amino-7-oxononanoate (AON), [acyl-carrier protein], and carbon dioxide. This is 8-amino-7-oxononanoate synthase from Aliivibrio salmonicida (strain LFI1238) (Vibrio salmonicida (strain LFI1238)).